Reading from the N-terminus, the 188-residue chain is Elongation factor P (188 aa).

The protein belongs to the elongation factor P family.

The protein resides in the cytoplasm. It functions in the pathway protein biosynthesis; polypeptide chain elongation. Involved in peptide bond synthesis. Stimulates efficient translation and peptide-bond synthesis on native or reconstituted 70S ribosomes in vitro. Probably functions indirectly by altering the affinity of the ribosome for aminoacyl-tRNA, thus increasing their reactivity as acceptors for peptidyl transferase. In Caulobacter sp. (strain K31), this protein is Elongation factor P.